Consider the following 86-residue polypeptide: Large ribosomal subunit protein bL27 (86 aa).

Residues 1-20 are disordered; sequence MAHKKAGGSSRNGRDSESKR.

It belongs to the bacterial ribosomal protein bL27 family.

The polypeptide is Large ribosomal subunit protein bL27 (Paraburkholderia phymatum (strain DSM 17167 / CIP 108236 / LMG 21445 / STM815) (Burkholderia phymatum)).